A 441-amino-acid chain; its full sequence is Arginine biosynthesis bifunctional protein ArgJ, mitochondrial (441 aa).

The substrate site is built by T177, K204, T215, E301, N436, and S441. T215 serves as the catalytic Nucleophile.

This sequence belongs to the ArgJ family. As to quaternary structure, heterodimer of an alpha and a beta chain. In terms of processing, the alpha and beta chains are autoproteolytically processed from a single precursor protein within the mitochondrion.

The protein localises to the mitochondrion matrix. It catalyses the reaction N(2)-acetyl-L-ornithine + L-glutamate = N-acetyl-L-glutamate + L-ornithine. It carries out the reaction L-glutamate + acetyl-CoA = N-acetyl-L-glutamate + CoA + H(+). It functions in the pathway amino-acid biosynthesis; L-arginine biosynthesis; L-ornithine and N-acetyl-L-glutamate from L-glutamate and N(2)-acetyl-L-ornithine (cyclic): step 1/1. The protein operates within amino-acid biosynthesis; L-arginine biosynthesis; N(2)-acetyl-L-ornithine from L-glutamate: step 1/4. Its function is as follows. Catalyzes two activities which are involved in the cyclic version of arginine biosynthesis: the synthesis of acetylglutamate from glutamate and acetyl-CoA, and of ornithine by transacetylation between acetylornithine and glutamate. In Lachancea thermotolerans (strain ATCC 56472 / CBS 6340 / NRRL Y-8284) (Yeast), this protein is Arginine biosynthesis bifunctional protein ArgJ, mitochondrial.